A 372-amino-acid chain; its full sequence is 4-hydroxy-3-methylbut-2-en-1-yl diphosphate synthase (flavodoxin) (372 aa).

Residues Cys270, Cys273, Cys305, and Glu312 each coordinate [4Fe-4S] cluster.

The protein belongs to the IspG family. The cofactor is [4Fe-4S] cluster.

The catalysed reaction is (2E)-4-hydroxy-3-methylbut-2-enyl diphosphate + oxidized [flavodoxin] + H2O + 2 H(+) = 2-C-methyl-D-erythritol 2,4-cyclic diphosphate + reduced [flavodoxin]. It functions in the pathway isoprenoid biosynthesis; isopentenyl diphosphate biosynthesis via DXP pathway; isopentenyl diphosphate from 1-deoxy-D-xylulose 5-phosphate: step 5/6. Its function is as follows. Converts 2C-methyl-D-erythritol 2,4-cyclodiphosphate (ME-2,4cPP) into 1-hydroxy-2-methyl-2-(E)-butenyl 4-diphosphate. The sequence is that of 4-hydroxy-3-methylbut-2-en-1-yl diphosphate synthase (flavodoxin) from Aliivibrio salmonicida (strain LFI1238) (Vibrio salmonicida (strain LFI1238)).